The chain runs to 390 residues: ATP-sensitive inward rectifier potassium channel 11 (390 aa).

Topologically, residues 1–65 (MLSRKGIIPE…LQDVFTTLVD (65 aa)) are cytoplasmic. Residues Asn48 and Arg50 each coordinate ATP. Residues 66-92 (LKWPHTLLIFTMSFLCSWLLFAMVWWL) form a helical membrane-spanning segment. The Extracellular portion of the chain corresponds to 93 to 116 (IAFAHGDLAPGEGTTVPCVTSIHS). A disulfide bridge connects residues Cys110 and Cys142. Positions 117-133 (FSSAFLFSIEVQVTIGF) form an intramembrane region, discontinuously helical; Pore-forming. K(+) contacts are provided by Thr130 and Phe133. A Selectivity filter motif is present at residues 130-135 (TIGFGG). Over 134–142 (GGRMVTEEC) the chain is Extracellular. A helical membrane pass occupies residues 143–171 (PLAILILIVQNIVGLMINAIMLGCIFMKT). Topologically, residues 172–390 (SQAHRRAETL…RFSISPDSLS (219 aa)) are cytoplasmic. A 1,2-diacyl-sn-glycero-3-phospho-(1D-myo-inositol-4,5-bisphosphate) is bound at residue Arg176. Tyr330 is an ATP binding site. Residue Thr341 is modified to Phosphothreonine; by MAPK1. Position 385 is a phosphoserine; by MAPK1 (Ser385).

This sequence belongs to the inward rectifier-type potassium channel (TC 1.A.2.1) family. KCNJ11 subfamily. In terms of assembly, homotetramer; the homotetramer binds four ATP molecules (one ATP per subunit). Forms an heterooctamer with ABCC8/SUR1; one KCNJ11 homotetramer interacts with four ABCC8/SUR1 molecules. Interacts with ABCC9/SUR2. Phosphorylation by MAPK1 results in changes in channel gating that destabilize the closed states and reduce the ATP sensitivity.

It is found in the membrane. It catalyses the reaction K(+)(in) = K(+)(out). Its activity is regulated as follows. KATP channels are regulated by cytoplasmic ATP/ADP ratios; ATP inhibits the channel by closing the pore, while ADP activates the channel. Activated by phosphatidylinositol 4,5-biphosphate (PtdIns(4,5)P2). Inward rectifier potassium channel that forms the pore of ATP-sensitive potassium channels (KATP), regulating potassium permeability as a function of cytoplasmic ATP and ADP concentrations in many different cells. Inward rectifier potassium channels are characterized by a greater tendency to allow potassium to flow into the cell rather than out of it. Their voltage dependence is regulated by the concentration of extracellular potassium; as external potassium is raised, the voltage range of the channel opening shifts to more positive voltages. The inward rectification is mainly due to the blockage of outward current by internal magnesium. Can be blocked by extracellular barium. In pancreatic cells, it forms KATP channels with ABCC8/SUR1. Can form cardiac and smooth muscle-type KATP channels with ABCC9. This chain is ATP-sensitive inward rectifier potassium channel 11 (KCNJ11), found in Cavia porcellus (Guinea pig).